Reading from the N-terminus, the 172-residue chain is Nicotinamide-nucleotide adenylyltransferase (172 aa).

Belongs to the archaeal NMN adenylyltransferase family.

It localises to the cytoplasm. It carries out the reaction beta-nicotinamide D-ribonucleotide + ATP + H(+) = diphosphate + NAD(+). The protein operates within cofactor biosynthesis; NAD(+) biosynthesis; NAD(+) from nicotinamide D-ribonucleotide: step 1/1. The chain is Nicotinamide-nucleotide adenylyltransferase from Aeropyrum pernix (strain ATCC 700893 / DSM 11879 / JCM 9820 / NBRC 100138 / K1).